The chain runs to 404 residues: Probable tRNA sulfurtransferase (404 aa).

The THUMP domain maps to 61 to 166; the sequence is EAVSERLKDV…SGYSYIMCDE (106 aa). Residues 184–185, 209–210, Arg266, Gly288, and Gln297 each bind ATP; these read LL and HF.

This sequence belongs to the ThiI family.

It is found in the cytoplasm. It catalyses the reaction [ThiI sulfur-carrier protein]-S-sulfanyl-L-cysteine + a uridine in tRNA + 2 reduced [2Fe-2S]-[ferredoxin] + ATP + H(+) = [ThiI sulfur-carrier protein]-L-cysteine + a 4-thiouridine in tRNA + 2 oxidized [2Fe-2S]-[ferredoxin] + AMP + diphosphate. The catalysed reaction is [ThiS sulfur-carrier protein]-C-terminal Gly-Gly-AMP + S-sulfanyl-L-cysteinyl-[cysteine desulfurase] + AH2 = [ThiS sulfur-carrier protein]-C-terminal-Gly-aminoethanethioate + L-cysteinyl-[cysteine desulfurase] + A + AMP + 2 H(+). The protein operates within cofactor biosynthesis; thiamine diphosphate biosynthesis. In terms of biological role, catalyzes the ATP-dependent transfer of a sulfur to tRNA to produce 4-thiouridine in position 8 of tRNAs, which functions as a near-UV photosensor. Also catalyzes the transfer of sulfur to the sulfur carrier protein ThiS, forming ThiS-thiocarboxylate. This is a step in the synthesis of thiazole, in the thiamine biosynthesis pathway. The sulfur is donated as persulfide by IscS. This is Probable tRNA sulfurtransferase from Bacillus cereus (strain B4264).